A 629-amino-acid chain; its full sequence is tRNA uridine 5-carboxymethylaminomethyl modification enzyme MnmG (629 aa).

FAD contacts are provided by residues 13–18 (GGGHAG), Val-125, and Ser-180. NAD(+) is bound at residue 273–287 (GPRYCPSIEDKIHRF). Gln-370 lines the FAD pocket.

It belongs to the MnmG family. As to quaternary structure, homodimer. Heterotetramer of two MnmE and two MnmG subunits. FAD serves as cofactor.

It localises to the cytoplasm. NAD-binding protein involved in the addition of a carboxymethylaminomethyl (cmnm) group at the wobble position (U34) of certain tRNAs, forming tRNA-cmnm(5)s(2)U34. The chain is tRNA uridine 5-carboxymethylaminomethyl modification enzyme MnmG from Shewanella sp. (strain MR-7).